The sequence spans 96 residues: UPF0235 protein YE3436 (96 aa).

Belongs to the UPF0235 family.

In Yersinia enterocolitica serotype O:8 / biotype 1B (strain NCTC 13174 / 8081), this protein is UPF0235 protein YE3436.